The chain runs to 571 residues: Urease subunit alpha (571 aa).

A Urease domain is found at 133–571 (GGVDSHIHFI…LPLAQRYFLF (439 aa)). The Ni(2+) site is built by H138, H140, and K221. K221 carries the N6-carboxylysine modification. H223 lines the substrate pocket. Residues H250 and H276 each coordinate Ni(2+). H324 functions as the Proton donor in the catalytic mechanism. D364 serves as a coordination point for Ni(2+).

It belongs to the metallo-dependent hydrolases superfamily. Urease alpha subunit family. Heterotrimer of UreA (gamma), UreB (beta) and UreC (alpha) subunits. Three heterotrimers associate to form the active enzyme. Ni cation is required as a cofactor. Carboxylation allows a single lysine to coordinate two nickel ions.

The protein resides in the cytoplasm. The catalysed reaction is urea + 2 H2O + H(+) = hydrogencarbonate + 2 NH4(+). The protein operates within nitrogen metabolism; urea degradation; CO(2) and NH(3) from urea (urease route): step 1/1. The chain is Urease subunit alpha from Anaeromyxobacter sp. (strain Fw109-5).